Here is a 454-residue protein sequence, read N- to C-terminus: Asparagine--tRNA ligase (454 aa).

It belongs to the class-II aminoacyl-tRNA synthetase family. In terms of assembly, homodimer.

Its subcellular location is the cytoplasm. The catalysed reaction is tRNA(Asn) + L-asparagine + ATP = L-asparaginyl-tRNA(Asn) + AMP + diphosphate + H(+). The polypeptide is Asparagine--tRNA ligase (Microcystis aeruginosa (strain NIES-843 / IAM M-2473)).